The chain runs to 354 residues: tRNA N6-adenosine threonylcarbamoyltransferase (354 aa).

Fe cation-binding residues include histidine 115 and histidine 119. Substrate-binding positions include leucine 138–glycine 142, aspartate 171, glycine 184, and asparagine 276. Aspartate 304 serves as a coordination point for Fe cation.

This sequence belongs to the KAE1 / TsaD family. Fe(2+) is required as a cofactor.

The protein localises to the cytoplasm. The enzyme catalyses L-threonylcarbamoyladenylate + adenosine(37) in tRNA = N(6)-L-threonylcarbamoyladenosine(37) in tRNA + AMP + H(+). Functionally, required for the formation of a threonylcarbamoyl group on adenosine at position 37 (t(6)A37) in tRNAs that read codons beginning with adenine. Is involved in the transfer of the threonylcarbamoyl moiety of threonylcarbamoyl-AMP (TC-AMP) to the N6 group of A37, together with TsaE and TsaB. TsaD likely plays a direct catalytic role in this reaction. This is tRNA N6-adenosine threonylcarbamoyltransferase from Xanthomonas oryzae pv. oryzae (strain MAFF 311018).